The following is a 679-amino-acid chain: Protein white (679 aa).

A disordered region spans residues 1-34 (MGQEDQEVLIRGGKATSTSAESLNNNNEQPYEQS). The segment covering 15 to 34 (ATSTSAESLNNNNEQPYEQS) has biased composition (polar residues). Residues 84–332 (NRVKGVFCNE…FSYIGATCPT (249 aa)) enclose the ABC transporter domain. An ATP-binding site is contributed by 121 to 128 (GSSGAGKT). The next 5 membrane-spanning stretches (helical) occupy residues 427-445 (LLQT…LGQQ), 457-477 (AIFL…ITVF), 507-525 (LPLF…YPLI), 534-555 (FFTA…GYLI), and 568-586 (VGPP…FLNS). 2 N-linked (GlcNAc...) asparagine glycosylation sites follow: Asn-628 and Asn-643. A helical membrane pass occupies residues 651–670 (FDFIGLALLIVGFRISAYIA).

This sequence belongs to the ABC transporter superfamily. ABCG family. Eye pigment precursor importer (TC 3.A.1.204) subfamily.

It localises to the membrane. Its function is as follows. May be part of a membrane-spanning permease system necessary for the transport of pigment precursors into pigment cells responsible for eye color. This is Protein white (W) from Ceratitis capitata (Mediterranean fruit fly).